A 444-amino-acid chain; its full sequence is Homogentisate 1,2-dioxygenase (444 aa).

His-298 functions as the Proton acceptor in the catalytic mechanism. Fe cation contacts are provided by His-341 and Glu-347. 2 residues coordinate homogentisate: Tyr-356 and His-377. His-377 contributes to the Fe cation binding site.

It belongs to the homogentisate dioxygenase family. In terms of assembly, hexamer; dimer of trimers. It depends on Fe cation as a cofactor.

The catalysed reaction is homogentisate + O2 = 4-maleylacetoacetate + H(+). It participates in amino-acid degradation; L-phenylalanine degradation; acetoacetate and fumarate from L-phenylalanine: step 4/6. In terms of biological role, involved in the catabolism of homogentisate (2,5-dihydroxyphenylacetate or 2,5-OH-PhAc), a central intermediate in the degradation of phenylalanine and tyrosine. Catalyzes the oxidative ring cleavage of the aromatic ring of homogentisate to yield maleylacetoacetate. This chain is Homogentisate 1,2-dioxygenase, found in Burkholderia orbicola (strain MC0-3).